A 258-amino-acid chain; its full sequence is uncharacterized protein (258 aa).

The N-terminal stretch at 1–23 (MVWCHYILLVLTFFLFTTFFTAA) is a signal peptide. Topologically, residues 24-64 (CPAIFTWLNSLFRLSNDSPHVVHTSIAEVGDIEDGRVDKDG) are cytoplasmic. A helical membrane pass occupies residues 65 to 85 (VLFVDLEFFLGCLPFFFFALV). Residues 86–123 (DQSSSSSVCKPLSPSDAKRSSNSLLRLSLVSSNDSDSS) are Extracellular-facing. The N-linked (GlcNAc...) asparagine glycan is linked to asparagine 118. The helical transmembrane segment at 124-144 (VSVSTFAFFFFFLFFLFFVFT) threads the bilayer. Over 145-230 (CTFSSELTSS…SSSISFRISS (86 aa)) the chain is Cytoplasmic. The chain crosses the membrane as a helical span at residues 231 to 251 (IFFLCSLVFMWFFNCFSDLNV). Topologically, residues 252 to 258 (LLQIKHS) are extracellular.

It localises to the membrane. This is an uncharacterized protein from Saccharomyces cerevisiae (strain ATCC 204508 / S288c) (Baker's yeast).